The chain runs to 353 residues: UPF0283 membrane protein YcjF (353 aa).

The segment covering 1-19 (MSEPLKPRIDFAEPLKEEP) has biased composition (basic and acidic residues). The tract at residues 1–35 (MSEPLKPRIDFAEPLKEEPTSAFKAQQTFSEAESR) is disordered. Transmembrane regions (helical) follow at residues 70–90 (MVMGGLALFGASVVGQGVQWT), 100–120 (VALGGCAAGALIVGAGVGSVV), and 213–233 (ESTLMIAVSPLALVDMAFIAW).

The protein belongs to the UPF0283 family.

Its subcellular location is the cell inner membrane. This chain is UPF0283 membrane protein YcjF, found in Salmonella paratyphi B (strain ATCC BAA-1250 / SPB7).